A 469-amino-acid chain; its full sequence is 3-isopropylmalate dehydratase large subunit (469 aa).

3 residues coordinate [4Fe-4S] cluster: cysteine 349, cysteine 409, and cysteine 412.

This sequence belongs to the aconitase/IPM isomerase family. LeuC type 1 subfamily. As to quaternary structure, heterodimer of LeuC and LeuD. [4Fe-4S] cluster is required as a cofactor.

It catalyses the reaction (2R,3S)-3-isopropylmalate = (2S)-2-isopropylmalate. It participates in amino-acid biosynthesis; L-leucine biosynthesis; L-leucine from 3-methyl-2-oxobutanoate: step 2/4. Its function is as follows. Catalyzes the isomerization between 2-isopropylmalate and 3-isopropylmalate, via the formation of 2-isopropylmaleate. The chain is 3-isopropylmalate dehydratase large subunit from Methylorubrum populi (strain ATCC BAA-705 / NCIMB 13946 / BJ001) (Methylobacterium populi).